We begin with the raw amino-acid sequence, 379 residues long: Mannitol-1-phosphate 5-dehydrogenase (379 aa).

An NAD(+)-binding site is contributed by 3–14 (AVHFGAGNIGRG).

Belongs to the mannitol dehydrogenase family.

It carries out the reaction D-mannitol 1-phosphate + NAD(+) = beta-D-fructose 6-phosphate + NADH + H(+). In Anoxybacillus flavithermus (strain DSM 21510 / WK1), this protein is Mannitol-1-phosphate 5-dehydrogenase.